Here is a 420-residue protein sequence, read N- to C-terminus: MSYQKVELAISKLIHLYPSPVQFLVAFSGGLDSTVMLDALCKHVSPQSIHAVYINHGLQPESNQWADACKKACERLGVKFESVDVQVSDISRQGIEAVARQKRYEALYSRVTKGTILLTAHHQRDQAETLLLNMARGAGISGLSGMPYVKNIQLNEQTLQHCRPLLNVDYDAIQSYAKQYRLDWVEDSSNQELDYRRNYLRHEVLPKIRHAWPFSDANFAKSAHHLNESLALLNELAEIDLQHTDYTDFYLSFTNVKELRWSRLKNMTRYWTESYVSGLRLNAKIYQWLQECLNNKNPQAKPKMLLARGELRFYNHVLYYFDDLKVHYCLAFDEFDASALQLFKALDFSEQLSSKQGGKLEGTVVRPLNPNDLSSGSQKKALKKWFKESKVPEWDRQRWPVLEKEGQVVAILGFYTKKSF.

An ATP-binding site is contributed by 28–33; the sequence is SGGLDS.

Belongs to the tRNA(Ile)-lysidine synthase family.

Its subcellular location is the cytoplasm. It catalyses the reaction cytidine(34) in tRNA(Ile2) + L-lysine + ATP = lysidine(34) in tRNA(Ile2) + AMP + diphosphate + H(+). Its function is as follows. Ligates lysine onto the cytidine present at position 34 of the AUA codon-specific tRNA(Ile) that contains the anticodon CAU, in an ATP-dependent manner. Cytidine is converted to lysidine, thus changing the amino acid specificity of the tRNA from methionine to isoleucine. The protein is tRNA(Ile)-lysidine synthase of Hydrogenovibrio crunogenus (strain DSM 25203 / XCL-2) (Thiomicrospira crunogena).